The following is a 295-amino-acid chain: Nucleotide-binding protein YvcJ (295 aa).

Residue 16-23 (GMSGAGKT) coordinates ATP. GTP is bound at residue 67-70 (DLRG).

Belongs to the RapZ-like family.

Its function is as follows. Displays ATPase and GTPase activities. Can also hydrolyze pNPP. May affect the expression of competence via the phosphorylation of a cellular component. The sequence is that of Nucleotide-binding protein YvcJ (yvcJ) from Bacillus subtilis (strain 168).